A 375-amino-acid polypeptide reads, in one-letter code: Probable serine/threonine-protein kinase PBL28 (375 aa).

Threonine 65 is modified (phosphothreonine). The region spanning 76-356 is the Protein kinase domain; that stretch reads FSDENLLGKG…MDCVKELQLI (281 aa). ATP is bound by residues 82 to 90 and lysine 104; that span reads LGKGGFGRV. Tyrosine 152 is subject to Phosphotyrosine. Aspartate 205 functions as the Proton acceptor in the catalytic mechanism. The residue at position 245 (threonine 245) is a Phosphothreonine. Position 253 is a phosphotyrosine (tyrosine 253).

This sequence belongs to the protein kinase superfamily. Ser/Thr protein kinase family.

Its subcellular location is the cell membrane. It carries out the reaction L-seryl-[protein] + ATP = O-phospho-L-seryl-[protein] + ADP + H(+). The enzyme catalyses L-threonyl-[protein] + ATP = O-phospho-L-threonyl-[protein] + ADP + H(+). Functionally, may be involved in plant defense signaling. The polypeptide is Probable serine/threonine-protein kinase PBL28 (Arabidopsis thaliana (Mouse-ear cress)).